The primary structure comprises 435 residues: Cytokine-dependent hematopoietic cell linker (435 aa).

Phosphotyrosine; by LYN is present on residues Tyr-69 and Tyr-96. The disordered stretch occupies residues 155–303 (KINKTPLPPP…PDPTKPDEKD (149 aa)). The segment at 160-165 (PLPPPR) is mediates interaction with PLCG1; essential for BCR signaling; involved in restoration of BCR-induced calcium response and ERK2 and JNK2 activation in BLNK-deficient cells expressing LAT. The interval 178–182 (PPAPP) is mediates interaction with LAT, GRB2, and FGR; involved in translocation to the glycolipid-enriched microdomain and restoration of BCR-induced calcium response in BLNK-deficient DT40 cells expressing LAT. The segment covering 226–249 (PESSCPSSNQNTQKSPPAIASSSY) has biased composition (polar residues). Residues 290-303 (NSEKPDPTKPDEKD) show a composition bias toward basic and acidic residues. One can recognise an SH2 domain in the interval 309-418 (WYIGEYSRQA…RKQCYLTQPL (110 aa)).

In terms of assembly, when phosphorylated, interacts with PLCG1, PLCG2, GRB2, VAV and LAT. Associated with a tyrosine-phosphorylated polypeptide (p92) in response to immunoreceptor stimulation. Interacts with LBR and AGO2. Interacts with FGR. Part of a complex consisting of CLNK, SKAP1 and FYB1. Interacts (via SH2 domain) with FYB1; this interaction allows SKAP1 and FYB1 to promote tyrosine phosphorylation of CLNK by LYN. Interacts (via SH2 domain) with MAP4K1. Tyrosine-phosphorylated upon BCR cross-linking. Tyrosine phosphorylation at both Tyr-69 and Tyr-96 are required for BCR-induced calcium response and are essential to restore PLCG2-mediated signaling in BLNK-deficient DT40 cells, but this phosphorylation is dispensable in cells expressing LAT. Interacts with the SH2 domain of PLCG1 via phosphorylated Tyr-96. Tyrosine phosphorylation is increased when complexed with SKAP1 and FYB1. Expressed in T-cells, mast cells, natural killer and natural killer T cells (at protein level). Expressed in cytokine-stimulated hemopoietic cells.

The protein resides in the cytoplasm. Functionally, an adapter protein which plays a role in the regulation of immunoreceptor signaling, including PLC-gamma-mediated B-cell antigen receptor (BCR) signaling and FC-epsilon R1-mediated mast cell degranulation. Together with FGR, it acts as a negative regulator of natural killer cell-activating receptors and inhibits interferon-gamma production. Acts as a positive regulator of both T-cell receptor and natural killer T (NKT) cell receptor signaling in CD4-positive NKT cells. Together with MAP4K1, it enhances CD3-triggered activation of T-cells and subsequent IL2 production. May be involved in tumor necrosis factor induced cell death by promoting reactive oxidative species generation, and MLKL oligomerization, ultimately leading to necrosis. Involved in phosphorylation of LAT. May be involved in high affinity immunoglobulin epsilon receptor signaling in mast cells. The sequence is that of Cytokine-dependent hematopoietic cell linker (Clnk) from Mus musculus (Mouse).